Consider the following 112-residue polypeptide: Large ribosomal subunit protein bL17 (112 aa).

The protein belongs to the bacterial ribosomal protein bL17 family. As to quaternary structure, part of the 50S ribosomal subunit. Contacts protein L32.

The chain is Large ribosomal subunit protein bL17 from Desulfitobacterium hafniense (strain DSM 10664 / DCB-2).